A 543-amino-acid chain; its full sequence is Chaperonin GroEL (543 aa).

ATP-binding positions include 31–34 (TMGP), 88–92 (DGTTT), glycine 415, 479–481 (DAL), and aspartate 495.

This sequence belongs to the chaperonin (HSP60) family. Forms a cylinder of 14 subunits composed of two heptameric rings stacked back-to-back. Interacts with the co-chaperonin GroES.

The protein localises to the cytoplasm. It carries out the reaction ATP + H2O + a folded polypeptide = ADP + phosphate + an unfolded polypeptide.. Together with its co-chaperonin GroES, plays an essential role in assisting protein folding. The GroEL-GroES system forms a nano-cage that allows encapsulation of the non-native substrate proteins and provides a physical environment optimized to promote and accelerate protein folding. The protein is Chaperonin GroEL of Clostridium tetani (strain Massachusetts / E88).